The primary structure comprises 202 residues: dTTP/UTP pyrophosphatase (202 aa).

The Proton acceptor role is filled by Asp83.

It belongs to the Maf family. YhdE subfamily. Requires a divalent metal cation as cofactor.

It is found in the cytoplasm. The enzyme catalyses dTTP + H2O = dTMP + diphosphate + H(+). It carries out the reaction UTP + H2O = UMP + diphosphate + H(+). Its function is as follows. Nucleoside triphosphate pyrophosphatase that hydrolyzes dTTP and UTP. May have a dual role in cell division arrest and in preventing the incorporation of modified nucleotides into cellular nucleic acids. In Polaromonas sp. (strain JS666 / ATCC BAA-500), this protein is dTTP/UTP pyrophosphatase.